The primary structure comprises 874 residues: MTADKEKKRSSSELRKEKSRDAARCRRSKETEVFYELAHELPLPHSVSSHLDKASIMRLAISFLRTHKLLSSVCSENESEAEADQQMDNLYLKALEGFIAVVTQDGDMIFLSENISKFMGLTQVELTGHSIFDFTHPCDHEEIRENLTLKNGSGFGKKSKDVSTERDFFMRMKCTVTNRGRTVNLKSATWKVLHCTGQVRVYNNCPPHSSLCGSKEPLLSCLIIMCEPIQHPSHMDIPLDSKTFLSRHSMDMKFTYCDDRILELIGYHPEELLGRSAYEFYHALDSENMTKSHQNLCTKGQVVSGQYRMLAKHGGYVWLETQGTVIYNPRNLQPQCIMCVNYVLSEIEKNDVVFSMDQTESLFKPHLMAMNSIFDSSDDVAVTEKSNYLFTKLKEEPEELAQLAPTPGDAIISLDFGSQNFDEPSAYGKAILPPGQPWVSGLRSHSAQSESGSLPAFTVPQADTPGNTTPSASSSSSCSTPSSPEDYYSSLENPLKIEVIEKLFAMDTEPRDPGSTQTDFSELDLETLAPYIPMDGEDFQLSPICPEEPLMPESPQPTPQHCFSTMTSIFQPLTPGATHGPFFLDKYPQQLESRKTESEHWPMSSIFFDAGSKGSLSPCCGQASTPLSSMGGRSNTQWPPDPPLHFGPTKWPVGDQSAESLGALPVGSSQLEPPSAPPHVSMFKMRSAKDFGARGPYMMSPAMIALSNKLKLKRQLEYEEQAFQDTSGGDPPGTSSSHLMWKRMKSLMGGTCPLMPDKTISANMAPDEFTQKSMRGLGQPLRHLPPPQPPSTRSSGENAKTGFPPQCYASQFQDYGPPGAQKVSGVASRLLGPSFEPYLLPELTRYDCEVNVPVPGSSTLLQGRDLLRALDQAT.

Residues 1–23 (MTADKEKKRSSSELRKEKSRDAA) form a disordered region. The bHLH domain occupies 14–67 (LRKEKSRDAARCRRSKETEVFYELAHELPLPHSVSSHLDKASIMRLAISFLRTH). The interval 26–53 (RRSKETEVFYELAHELPLPHSVSSHLDK) is DNA-binding. One can recognise a PAS 1 domain in the interval 84 to 154 (DQQMDNLYLK…ENLTLKNGSG (71 aa)). Residues 171 to 192 (RMKCTVTNRGRTVNLKSATWKV) are required for heterodimer formation with ARNT. One can recognise a PAS 2 domain in the interval 230 to 300 (QHPSHMDIPL…KSHQNLCTKG (71 aa)). The PAC domain maps to 304–347 (SGQYRMLAKHGGYVWLETQGTVIYNPRNLQPQCIMCVNYVLSEI). Pro-405 carries the post-translational modification 4-hydroxyproline. A disordered region spans residues 438 to 489 (WVSGLRSHSAQSESGSLPAFTVPQADTPGNTTPSASSSSSCSTPSSPEDYYS). The segment covering 443–452 (RSHSAQSESG) has biased composition (polar residues). The span at 464–484 (TPGNTTPSASSSSSCSTPSSP) shows a compositional bias: low complexity. Residues 495–541 (LKIEVIEKLFAMDTEPRDPGSTQTDFSELDLETLAPYIPMDGEDFQL) form an NTAD region. Pro-530 carries the 4-hydroxyproline modification. Residues 777-803 (LGQPLRHLPPPQPPSTRSSGENAKTGF) form a disordered region. The CTAD stretch occupies residues 834–874 (SFEPYLLPELTRYDCEVNVPVPGSSTLLQGRDLLRALDQAT). Residue Thr-844 is modified to Phosphothreonine. Residue Asn-851 is modified to (3S)-3-hydroxyasparagine.

In terms of assembly, interacts with HIF3A isoform 2. Efficient DNA binding requires dimerization with another bHLH protein. Heterodimerizes with ARNT; heterodimer binds to core DNA sequence 5'-TACGTG-3' within the hypoxia response element (HRE) of target gene promoters. Interacts with CREBBP. Interacts with EGLN1. Interacts with VHL. Post-translationally, in normoxia, is probably hydroxylated on Pro-405 and Pro-530 by EGLN1/PHD1, EGLN2/PHD2 and/or EGLN3/PHD3. The hydroxylated prolines promote interaction with VHL, initiating rapid ubiquitination and subsequent proteasomal degradation. Under hypoxia, proline hydroxylation is impaired and ubiquitination is attenuated, resulting in stabilization. In normoxia, is hydroxylated on Asn-851 by HIF1AN thus probably abrogating interaction with CREBBP and EP300 and preventing transcriptional activation. In terms of processing, phosphorylated on multiple sites in the CTAD. Post-translationally, the iron and 2-oxoglutarate dependent 3-hydroxylation of asparagine is (S) stereospecific within HIF CTAD domains. In terms of tissue distribution, expressed in most tissues, with highest levels in lung, followed by heart, kidney, brain and liver. Predominantly expressed in endothelial cells. Also found in smooth muscle cells of the uterus, neurons, and brown adipose tissue. High expression in embryonic choroid plexus and kidney glomeruli.

The protein resides in the nucleus. Its subcellular location is the nucleus speckle. Its function is as follows. Transcription factor involved in the induction of oxygen regulated genes. Heterodimerizes with ARNT; heterodimer binds to core DNA sequence 5'-TACGTG-3' within the hypoxia response element (HRE) of target gene promoters. Regulates the vascular endothelial growth factor (VEGF) expression and seems to be implicated in the development of blood vessels and the tubular system of lung. May also play a role in the formation of the endothelium that gives rise to the blood brain barrier. Potent activator of the Tie-2 tyrosine kinase expression. Activation requires recruitment of transcriptional coactivators such as CREBBP and probably EP300. Interaction with redox regulatory protein APEX seems to activate CTAD. The chain is Endothelial PAS domain-containing protein 1 (Epas1) from Mus musculus (Mouse).